We begin with the raw amino-acid sequence, 302 residues long: UTP--glucose-1-phosphate uridylyltransferase (302 aa).

The protein belongs to the UDPGP type 2 family. In terms of assembly, homotetramer or homopentamer. The cofactor is Mg(2+).

It carries out the reaction alpha-D-glucose 1-phosphate + UTP + H(+) = UDP-alpha-D-glucose + diphosphate. Its function is as follows. May play a role in stationary phase survival. This is UTP--glucose-1-phosphate uridylyltransferase (galU) from Escherichia coli O157:H7.